The sequence spans 276 residues: Adenylate kinase (276 aa).

ATP is bound at residue G52–T57. The NMP stretch occupies residues A72–V101. AMP contacts are provided by residues T73, R78, G99–V101, G128–R131, and Q135. The tract at residues G169 to D206 is LID. ATP is bound by residues R170 and S179–Y180. The AMP site is built by R203 and R214. Q242 is an ATP binding site.

The protein belongs to the adenylate kinase family. AK2 subfamily. In terms of assembly, monomer.

The protein localises to the cytoplasm. The protein resides in the cytosol. It localises to the mitochondrion intermembrane space. It catalyses the reaction AMP + ATP = 2 ADP. Its function is as follows. Catalyzes the reversible transfer of the terminal phosphate group between ATP and AMP. Plays an important role in cellular energy homeostasis and in adenine nucleotide metabolism. Adenylate kinase activity is critical for regulation of the phosphate utilization and the AMP de novo biosynthesis pathways. This chain is Adenylate kinase (adk1), found in Pyrenophora tritici-repentis (strain Pt-1C-BFP) (Wheat tan spot fungus).